The sequence spans 352 residues: Phosphoribosylformylglycinamidine cyclo-ligase (352 aa).

The protein belongs to the AIR synthase family.

It localises to the cytoplasm. It carries out the reaction 2-formamido-N(1)-(5-O-phospho-beta-D-ribosyl)acetamidine + ATP = 5-amino-1-(5-phospho-beta-D-ribosyl)imidazole + ADP + phosphate + H(+). It participates in purine metabolism; IMP biosynthesis via de novo pathway; 5-amino-1-(5-phospho-D-ribosyl)imidazole from N(2)-formyl-N(1)-(5-phospho-D-ribosyl)glycinamide: step 2/2. The chain is Phosphoribosylformylglycinamidine cyclo-ligase from Stenotrophomonas maltophilia (strain R551-3).